The sequence spans 758 residues: Calpain (758 aa).

In terms of domain architecture, Calpain catalytic spans 99–397 (LWEDPDFPAN…FSRVEVCHLG (299 aa)). Catalysis depends on residues C154, H313, and N337. The segment at 398–562 (LESLEYNQNF…TSITEQELDE (165 aa)) is domain III. The tract at residues 563 to 582 (DNTNQGLPDDVIEALKLEDT) is linker. The segment at 583-757 (LLDEDQEIEQ…AEDYLRFSVY (175 aa)) is domain IV. Ca(2+)-binding residues include D641, N643, T645, H647, E652, D671, D673, S675, Y677, and E682. 2 consecutive EF-hand domains span residues 658–693 (IQAK…AGYH) and 694–729 (VSNR…LKTA).

This sequence belongs to the peptidase C2 family.

Its activity is regulated as follows. Activated by free cytoplasmic calcium. Functionally, calpains are calcium-activated non-lysosomal thiol-proteases. This chain is Calpain, found in Schistosoma mansoni (Blood fluke).